The primary structure comprises 29 residues: 28 kDa protein (29 aa).

In Tritrichomonas foetus (Trichomonas foetus), this protein is 28 kDa protein.